A 115-amino-acid chain; its full sequence is Hydrogenase maturation factor HypA (115 aa).

Residue His-2 coordinates Ni(2+). The Zn(2+) site is built by Cys-73, Cys-76, Cys-89, and Cys-92.

Belongs to the HypA/HybF family.

Functionally, involved in the maturation of [NiFe] hydrogenases. Required for nickel insertion into the metal center of the hydrogenase. In Polaromonas naphthalenivorans (strain CJ2), this protein is Hydrogenase maturation factor HypA.